Consider the following 236-residue polypeptide: N-alpha-acetyltransferase 40 (236 aa).

Glycine 2 is lipidated: N-myristoyl glycine. In terms of domain architecture, N-acetyltransferase spans 63 to 217 (SDLDQKTIDW…DCTYEILSKR (155 aa)). Residues tyrosine 85, 127-129 (DVE), and tyrosine 138 contribute to the substrate site. Residues 140–142 (VQL) and 148–153 (RKGVGK) contribute to the acetyl-CoA site. Threonine 174 contributes to the substrate binding site. Residue asparagine 179 participates in acetyl-CoA binding. Tyrosine 211 lines the substrate pocket.

Belongs to the acetyltransferase family. NAA40 subfamily.

Its subcellular location is the cytoplasm. The protein localises to the nucleus. It carries out the reaction N-terminal L-seryl-[histone H4] + acetyl-CoA = N-terminal N(alpha)-acetyl-L-seryl-[histone H4] + CoA + H(+). It catalyses the reaction N-terminal L-seryl-[histone H2A] + acetyl-CoA = N-terminal N(alpha)-acetyl-L-seryl-[histone H2A] + CoA + H(+). N-alpha-acetyltransferase that specifically mediates the acetylation of the N-terminal residues of histones H4 and H2A. In contrast to other N-alpha-acetyltransferase, has a very specific selectivity for histones H4 and H2A N-terminus and specifically recognizes the 'Ser-Gly-Arg-Gly sequence'. The sequence is that of N-alpha-acetyltransferase 40 (naa40) from Xenopus laevis (African clawed frog).